We begin with the raw amino-acid sequence, 201 residues long: Kinetochore protein SPC24 homolog (201 aa).

Positions 78 to 133 form a coiled coil; that stretch reads DIAAEDEIERLQKELDEEMEREFKLKDELRLVADELKDLNAQLSSIDEHKQSTKRK.

Belongs to the SPC24 family. As to quaternary structure, component of the NDC80 complex, which consists of NDC80, NUF2, SPC24 and SPC25. Highly expressed in actively dividing tissues, such as shoot apical meristem (SAM), root apical meristem (RAM), vasculature, newly emerging leaves and inflorescence shoots.

The protein resides in the chromosome. It localises to the centromere. Its function is as follows. Acts as a component of the essential kinetochore-associated NDC80 complex, which is required for chromosome segregation and spindle checkpoint activity to ensure proper cell division. Required for the maintenance of plant architecture. This Arabidopsis thaliana (Mouse-ear cress) protein is Kinetochore protein SPC24 homolog.